The sequence spans 235 residues: 7-cyano-7-deazaguanine synthase (235 aa).

10–20 (FSGGQDSTTCL) provides a ligand contact to ATP. Residues C198, C213, C216, and C219 each coordinate Zn(2+).

This sequence belongs to the QueC family. Zn(2+) serves as cofactor.

It catalyses the reaction 7-carboxy-7-deazaguanine + NH4(+) + ATP = 7-cyano-7-deazaguanine + ADP + phosphate + H2O + H(+). It functions in the pathway purine metabolism; 7-cyano-7-deazaguanine biosynthesis. Catalyzes the ATP-dependent conversion of 7-carboxy-7-deazaguanine (CDG) to 7-cyano-7-deazaguanine (preQ(0)). The sequence is that of 7-cyano-7-deazaguanine synthase from Paracidovorax citrulli (strain AAC00-1) (Acidovorax citrulli).